A 280-amino-acid polypeptide reads, in one-letter code: Formamidopyrimidine-DNA glycosylase (280 aa).

Residue proline 2 is the Schiff-base intermediate with DNA of the active site. Glutamate 3 acts as the Proton donor in catalysis. Lysine 60 serves as the catalytic Proton donor; for beta-elimination activity. Residues histidine 93 and arginine 112 each coordinate DNA. The FPG-type zinc-finger motif lies at 240–274 (YVYGQHSKPCRVCGADIIKIKVGGRGTHLCPTCQP). The active-site Proton donor; for delta-elimination activity is the arginine 264.

It belongs to the FPG family. As to quaternary structure, monomer. It depends on Zn(2+) as a cofactor.

The enzyme catalyses Hydrolysis of DNA containing ring-opened 7-methylguanine residues, releasing 2,6-diamino-4-hydroxy-5-(N-methyl)formamidopyrimidine.. The catalysed reaction is 2'-deoxyribonucleotide-(2'-deoxyribose 5'-phosphate)-2'-deoxyribonucleotide-DNA = a 3'-end 2'-deoxyribonucleotide-(2,3-dehydro-2,3-deoxyribose 5'-phosphate)-DNA + a 5'-end 5'-phospho-2'-deoxyribonucleoside-DNA + H(+). Involved in base excision repair of DNA damaged by oxidation or by mutagenic agents. Acts as a DNA glycosylase that recognizes and removes damaged bases. Has a preference for oxidized purines, such as 7,8-dihydro-8-oxoguanine (8-oxoG). Has AP (apurinic/apyrimidinic) lyase activity and introduces nicks in the DNA strand. Cleaves the DNA backbone by beta-delta elimination to generate a single-strand break at the site of the removed base with both 3'- and 5'-phosphates. This Oceanobacillus iheyensis (strain DSM 14371 / CIP 107618 / JCM 11309 / KCTC 3954 / HTE831) protein is Formamidopyrimidine-DNA glycosylase.